The primary structure comprises 371 residues: MRAEIEALAQDIRRSAALLKRHLNWDEALMRLDELNASAENPDLWNDAGAAQKIMRERNELDSAIQGCRALERELADLAELIELGEMEGDQTVIDDAEEQVRALKERAAKMELETLLSGEADHNDCYMEINAGAGGTESQDWAEMLLRMYTRWAEKHGYKVEWLEESAGEQAGIKSATIRILGHNAYGWLKTESGVHRLVRISPYDSAARRHTSFSSAWVYPVIDDTIDIQINESECRIDTYRASGAGGQHINKTDSAVRITHIPTGIAVACQMERSQHQNRARAWDMLRARLYEAELQKREAAAQALEDQKTDIGWGHQIRSYVLQPYQMVKDLRTNVETSDTQGVLDGDLDMFMAASLAARVQGQVDQG.

Q250 carries the post-translational modification N5-methylglutamine.

Belongs to the prokaryotic/mitochondrial release factor family. In terms of processing, methylated by PrmC. Methylation increases the termination efficiency of RF2.

The protein localises to the cytoplasm. Its function is as follows. Peptide chain release factor 2 directs the termination of translation in response to the peptide chain termination codons UGA and UAA. The polypeptide is Peptide chain release factor 2 (Paramagnetospirillum magneticum (strain ATCC 700264 / AMB-1) (Magnetospirillum magneticum)).